Here is a 97-residue protein sequence, read N- to C-terminus: uncharacterized protein (97 aa).

Helical transmembrane passes span isoleucine 5–isoleucine 25, isoleucine 49–glycine 71, and leucine 75–asparagine 92.

It localises to the cell membrane. This is an uncharacterized protein from Bacillus subtilis (strain 168).